Reading from the N-terminus, the 135-residue chain is Transmembrane protein 107 (135 aa).

The next 4 membrane-spanning stretches (helical) occupy residues 7–27 (LVPA…TIFW), 55–75 (VALS…LSGV), 83–103 (ALLS…FVFH), and 110–130 (YWII…FLLL).

It is found in the membrane. In terms of biological role, may play a role in cilia formation and embryonic patterning. In Danio rerio (Zebrafish), this protein is Transmembrane protein 107 (tmem107).